Here is a 302-residue protein sequence, read N- to C-terminus: Light-independent protochlorophyllide reductase iron-sulfur ATP-binding protein (302 aa).

ATP-binding positions include G46–T51 and K75. Position 50 (S50) interacts with Mg(2+). [4Fe-4S] cluster is bound by residues C131 and C165. N216–R217 serves as a coordination point for ATP.

This sequence belongs to the NifH/BchL/ChlL family. As to quaternary structure, homodimer. Protochlorophyllide reductase is composed of three subunits; BchL, BchN and BchB. Requires [4Fe-4S] cluster as cofactor.

The catalysed reaction is chlorophyllide a + oxidized 2[4Fe-4S]-[ferredoxin] + 2 ADP + 2 phosphate = protochlorophyllide a + reduced 2[4Fe-4S]-[ferredoxin] + 2 ATP + 2 H2O. Its pathway is porphyrin-containing compound metabolism; bacteriochlorophyll biosynthesis (light-independent). In terms of biological role, component of the dark-operative protochlorophyllide reductase (DPOR) that uses Mg-ATP and reduced ferredoxin to reduce ring D of protochlorophyllide (Pchlide) to form chlorophyllide a (Chlide). This reaction is light-independent. The L component serves as a unique electron donor to the NB-component of the complex, and binds Mg-ATP. The protein is Light-independent protochlorophyllide reductase iron-sulfur ATP-binding protein of Methylocella silvestris (strain DSM 15510 / CIP 108128 / LMG 27833 / NCIMB 13906 / BL2).